The chain runs to 185 residues: Peptidyl-tRNA hydrolase (185 aa).

Tyr-14 provides a ligand contact to tRNA. His-19 (proton acceptor) is an active-site residue. TRNA-binding residues include Tyr-65, Asn-67, and Asn-113.

Belongs to the PTH family. Monomer.

It is found in the cytoplasm. It catalyses the reaction an N-acyl-L-alpha-aminoacyl-tRNA + H2O = an N-acyl-L-amino acid + a tRNA + H(+). In terms of biological role, hydrolyzes ribosome-free peptidyl-tRNAs (with 1 or more amino acids incorporated), which drop off the ribosome during protein synthesis, or as a result of ribosome stalling. Functionally, catalyzes the release of premature peptidyl moieties from peptidyl-tRNA molecules trapped in stalled 50S ribosomal subunits, and thus maintains levels of free tRNAs and 50S ribosomes. The protein is Peptidyl-tRNA hydrolase of Rickettsia canadensis (strain McKiel).